A 376-amino-acid polypeptide reads, in one-letter code: Protein-glutamate methylesterase/protein-glutamine glutaminase (376 aa).

One can recognise a Response regulatory domain in the interval 4–121 (KVLVVDDSSF…ARNRDEAVSL (118 aa)). Aspartate 55 bears the 4-aspartylphosphate mark. The segment at 142-161 (SSQSTSTVESRTATTRTATS) is disordered. Over residues 145-161 (STSTVESRTATTRTATS) the composition is skewed to low complexity. The CheB-type methylesterase domain occupies 183–376 (TGKKYQLTAI…ERMLVEVGLK (194 aa)). Active-site residues include serine 195, histidine 222, and aspartate 318.

The protein belongs to the CheB family. In terms of processing, phosphorylated by CheA. Phosphorylation of the N-terminal regulatory domain activates the methylesterase activity.

It localises to the cytoplasm. The catalysed reaction is [protein]-L-glutamate 5-O-methyl ester + H2O = L-glutamyl-[protein] + methanol + H(+). It catalyses the reaction L-glutaminyl-[protein] + H2O = L-glutamyl-[protein] + NH4(+). Functionally, involved in chemotaxis. Part of a chemotaxis signal transduction system that modulates chemotaxis in response to various stimuli. Catalyzes the demethylation of specific methylglutamate residues introduced into the chemoreceptors (methyl-accepting chemotaxis proteins or MCP) by CheR. Also mediates the irreversible deamidation of specific glutamine residues to glutamic acid. In Aliivibrio fischeri (strain ATCC 700601 / ES114) (Vibrio fischeri), this protein is Protein-glutamate methylesterase/protein-glutamine glutaminase.